We begin with the raw amino-acid sequence, 562 residues long: Furostanol glycoside 26-O-beta-glucosidase (562 aa).

A chloroplast-targeting transit peptide spans 1 to 44 (MAAQLGLPLVSCHRGASQAASSSAHLVPGASAIMQAGNRRQKMR). Residues glutamine 110, histidine 214, and 259-260 (NE) contribute to the a beta-D-glucoside site. Catalysis depends on glutamate 260, which acts as the Proton donor. A disulfide bond links cysteine 279 and cysteine 285. A beta-D-glucoside is bound by residues tyrosine 401, glutamate 472, tryptophan 518, 525–526 (EW), and phenylalanine 534. The Nucleophile role is filled by glutamate 472.

Belongs to the glycosyl hydrolase 1 family. As to quaternary structure, heterodimer. The N-terminus of the larger subunit is blocked and the smaller subunit might be derived from the larger one.

The protein localises to the plastid. The protein resides in the chloroplast. The enzyme catalyses protodioscin + H2O = 26-deglucoprotodioscin + D-glucose. With respect to regulation, partially inhibited by glucono-1,5-lactone, conduritol beta-epoxide and diosgenin, but not by beta-sitosterol or cholesterol. In terms of biological role, beta-glucosidase involved in saponin metabolism. Highly specific for the cleavage of C-26-bound glucose moiety of furostanol glycosides such as protogracillin and protodioscin. No activity with nuatigenin glycoside. Convers furostanol glycosides to spirostanol glycosides. The polypeptide is Furostanol glycoside 26-O-beta-glucosidase (Hellenia speciosa (Crepe ginger)).